The primary structure comprises 471 residues: Mannose-1-phosphate guanylyltransferase (471 aa).

Belongs to the mannose-6-phosphate isomerase type 2 family.

It carries out the reaction alpha-D-mannose 1-phosphate + GTP + H(+) = GDP-alpha-D-mannose + diphosphate. It participates in nucleotide-sugar biosynthesis; GDP-alpha-D-mannose biosynthesis; GDP-alpha-D-mannose from alpha-D-mannose 1-phosphate (GTP route): step 1/1. Involved in the biosynthesis of the K2 capsular polysaccharide biosynthesis. The polypeptide is Mannose-1-phosphate guanylyltransferase (manC) (Klebsiella pneumoniae).